The chain runs to 339 residues: Type IV secretion system protein PtlH homolog (339 aa).

It belongs to the GSP E family.

The sequence is that of Type IV secretion system protein PtlH homolog (ptlH) from Bordetella bronchiseptica (strain ATCC BAA-588 / NCTC 13252 / RB50) (Alcaligenes bronchisepticus).